Reading from the N-terminus, the 299-residue chain is ATP phosphoribosyltransferase (299 aa).

Belongs to the ATP phosphoribosyltransferase family. Long subfamily. As to quaternary structure, equilibrium between an active dimeric form, an inactive hexameric form and higher aggregates. Interconversion between the various forms is largely reversible and is influenced by the natural substrates and inhibitors of the enzyme. Requires Mg(2+) as cofactor.

It is found in the cytoplasm. It catalyses the reaction 1-(5-phospho-beta-D-ribosyl)-ATP + diphosphate = 5-phospho-alpha-D-ribose 1-diphosphate + ATP. The protein operates within amino-acid biosynthesis; L-histidine biosynthesis; L-histidine from 5-phospho-alpha-D-ribose 1-diphosphate: step 1/9. Its activity is regulated as follows. Feedback inhibited by histidine. In terms of biological role, catalyzes the condensation of ATP and 5-phosphoribose 1-diphosphate to form N'-(5'-phosphoribosyl)-ATP (PR-ATP). Has a crucial role in the pathway because the rate of histidine biosynthesis seems to be controlled primarily by regulation of HisG enzymatic activity. The sequence is that of ATP phosphoribosyltransferase from Salmonella dublin (strain CT_02021853).